We begin with the raw amino-acid sequence, 315 residues long: Porphobilinogen deaminase (315 aa).

S-(dipyrrolylmethanemethyl)cysteine is present on cysteine 241.

It belongs to the HMBS family. As to quaternary structure, monomer. Requires dipyrromethane as cofactor.

The catalysed reaction is 4 porphobilinogen + H2O = hydroxymethylbilane + 4 NH4(+). The protein operates within porphyrin-containing compound metabolism; protoporphyrin-IX biosynthesis; coproporphyrinogen-III from 5-aminolevulinate: step 2/4. Tetrapolymerization of the monopyrrole PBG into the hydroxymethylbilane pre-uroporphyrinogen in several discrete steps. The protein is Porphobilinogen deaminase of Nitratidesulfovibrio vulgaris (strain ATCC 29579 / DSM 644 / CCUG 34227 / NCIMB 8303 / VKM B-1760 / Hildenborough) (Desulfovibrio vulgaris).